The sequence spans 978 residues: Xylanolytic transcriptional activator xlnR (978 aa).

Disordered regions lie at residues 1–39 and 53–116; these read MSTTSVQHFAPSYPPFSSGLSSNRMAQSQTPGLDTLAEG and AAAG…RDPL. Residues 18–32 are compositionally biased toward polar residues; that stretch reads SGLSSNRMAQSQTPG. The span at 53–69 shows a compositional bias: low complexity; that stretch reads AAAGDTTATAASGPSDP. The span at 71–82 shows a compositional bias: basic and acidic residues; it reads SKSKDPYDFDHH. The span at 83-93 shows a compositional bias: basic residues; that stretch reads NHNHHNHHNNN. Residues 94–103 are compositionally biased toward low complexity; that stretch reads HHPNSNSNNS. A DNA-binding region (zn(2)-C6 fungal-type) is located at residues 140–166; it reads CDQCNQLRTRCDGQNPCAHCIEFGLTC. Disordered stretches follow at residues 179-223, 238-293, and 588-629; these read SKKD…ELNG, SAQP…PIPV, and ELPP…PGNT. Positions 184 to 193 are enriched in low complexity; it reads AAAAAAATAT. Basic and acidic residues predominate over residues 214 to 223; that stretch reads PPDRRQELNG.

It belongs to the xlnR/xlr1 family.

Its subcellular location is the nucleus. Its function is as follows. Transcriptional activator of the xylanolytic system. Involved in the regulation of extracellular cellulolytic and xylanolytic genes and in the regulation of the intracellular activities of D-xylose catabolic genes in the pentose catabolic pathway (PCP) in response to the presence of D-xylose. The chain is Xylanolytic transcriptional activator xlnR (xlnR) from Aspergillus clavatus (strain ATCC 1007 / CBS 513.65 / DSM 816 / NCTC 3887 / NRRL 1 / QM 1276 / 107).